The chain runs to 601 residues: Elongation factor 4 (601 aa).

The tr-type G domain occupies 7 to 189 (SNVRNFSIVA…AIVTRLPPPK (183 aa)). GTP contacts are provided by residues 19–24 (DHGKST) and 136–139 (NKVD).

The protein belongs to the TRAFAC class translation factor GTPase superfamily. Classic translation factor GTPase family. LepA subfamily.

It is found in the cell inner membrane. It carries out the reaction GTP + H2O = GDP + phosphate + H(+). In terms of biological role, required for accurate and efficient protein synthesis under certain stress conditions. May act as a fidelity factor of the translation reaction, by catalyzing a one-codon backward translocation of tRNAs on improperly translocated ribosomes. Back-translocation proceeds from a post-translocation (POST) complex to a pre-translocation (PRE) complex, thus giving elongation factor G a second chance to translocate the tRNAs correctly. Binds to ribosomes in a GTP-dependent manner. The protein is Elongation factor 4 of Afipia carboxidovorans (strain ATCC 49405 / DSM 1227 / KCTC 32145 / OM5) (Oligotropha carboxidovorans).